The chain runs to 249 residues: Chitooligosaccharide deacetylase (249 aa).

Positions 61 and 125 each coordinate Mg(2+).

It belongs to the YdjC deacetylase family. ChbG subfamily. As to quaternary structure, homodimer. Mg(2+) is required as a cofactor.

It localises to the cytoplasm. It carries out the reaction N,N'-diacetylchitobiose + H2O = N-acetyl-beta-D-glucosaminyl-(1-&gt;4)-D-glucosamine + acetate. The enzyme catalyses diacetylchitobiose-6'-phosphate + H2O = N'-monoacetylchitobiose-6'-phosphate + acetate. The protein operates within glycan degradation; chitin degradation. Involved in the degradation of chitin. ChbG is essential for growth on the acetylated chitooligosaccharides chitobiose and chitotriose but is dispensable for growth on cellobiose and chitosan dimer, the deacetylated form of chitobiose. Deacetylation of chitobiose-6-P and chitotriose-6-P is necessary for both the activation of the chb promoter by the regulatory protein ChbR and the hydrolysis of phosphorylated beta-glucosides by the phospho-beta-glucosidase ChbF. Catalyzes the removal of only one acetyl group from chitobiose-6-P to yield monoacetylchitobiose-6-P, the inducer of ChbR and the substrate of ChbF. The sequence is that of Chitooligosaccharide deacetylase from Escherichia coli O9:H4 (strain HS).